The following is a 172-amino-acid chain: 3-hydroxydecanoyl-[acyl-carrier-protein] dehydratase (172 aa).

H71 is an active-site residue.

It belongs to the thioester dehydratase family. FabA subfamily. Homodimer.

The protein resides in the cytoplasm. It carries out the reaction a (3R)-hydroxyacyl-[ACP] = a (2E)-enoyl-[ACP] + H2O. It catalyses the reaction (3R)-hydroxydecanoyl-[ACP] = (2E)-decenoyl-[ACP] + H2O. The catalysed reaction is (2E)-decenoyl-[ACP] = (3Z)-decenoyl-[ACP]. The protein operates within lipid metabolism; fatty acid biosynthesis. In terms of biological role, necessary for the introduction of cis unsaturation into fatty acids. Catalyzes the dehydration of (3R)-3-hydroxydecanoyl-ACP to E-(2)-decenoyl-ACP and then its isomerization to Z-(3)-decenoyl-ACP. Can catalyze the dehydratase reaction for beta-hydroxyacyl-ACPs with saturated chain lengths up to 16:0, being most active on intermediate chain length. The chain is 3-hydroxydecanoyl-[acyl-carrier-protein] dehydratase from Enterobacter sp. (strain 638).